Here is a 324-residue protein sequence, read N- to C-terminus: MHRTTRIKITELNPHLMCVLCGGYFIDATTIVECLHSFCKMCIVRYLETSKYCPICDVQVHKTKPLLNIRSDKTLQDIVYKLVPGLFKNEMKRRRDFYAEHPVDATNGSNEDRGEVSDEDKRIIADDEIISLSIEFFDQKKLDGKDGEEKESTKEVTVKRYLQCPAAMTVMHLRKFLRSKMDIPCTFQIEVMYEDEPLKDYYTLMDIAYIYTWRRNGPLPLKYRVRPGCKKIKLSSPRNDMSGGRRPDTESDSSSDKPNSPSIVAAPSTSSSMPSPNTPVQSTHPSFPHISTINGVSAKVGHNGQTPFSSKVCKTSHNGSNSLG.

The RING-type zinc finger occupies 18 to 57 (CVLCGGYFIDATTIVECLHSFCKMCIVRYLETSKYCPICD). The Nuclear localization signal signature appears at 81 to 95 (KLVPGLFKNEMKRRR). Residues 232 to 324 (IKLSSPRNDM…TSHNGSNSLG (93 aa)) are disordered. Residues 256–279 (DKPNSPSIVAAPSTSSSMPSPNTP) show a composition bias toward low complexity. Composition is skewed to polar residues over residues 280–295 (VQSTHPSFPHISTING) and 303–324 (NGQTPFSSKVCKTSHNGSNSLG).

In terms of assembly, component of a PRC1-like complex. Homodimer. Interacts with cbx2.

It is found in the nucleus. In terms of biological role, component of a Polycomb group (PcG) multiprotein PRC1-like complex, a complex class required to maintain the transcriptionally repressive state of many genes, including Hox genes, throughout development. PcG PRC1 complex acts via chromatin remodeling and modification of histones; it mediates monoubiquitination of histone H2A 'Lys-119', rendering chromatin heritably changed in its expressibility. In the PRC1 complex, it is required to stimulate the E3 ubiquitin-protein ligase activity of rnf2. This chain is Polycomb complex protein BMI-1-B (bmi1b), found in Danio rerio (Zebrafish).